A 155-amino-acid polypeptide reads, in one-letter code: Small ribosomal subunit protein uS7 (155 aa).

This sequence belongs to the universal ribosomal protein uS7 family. Part of the 30S ribosomal subunit. Contacts proteins S9 and S11.

One of the primary rRNA binding proteins, it binds directly to 16S rRNA where it nucleates assembly of the head domain of the 30S subunit. Is located at the subunit interface close to the decoding center, probably blocks exit of the E-site tRNA. This chain is Small ribosomal subunit protein uS7, found in Thermosipho africanus (strain TCF52B).